Here is a 332-residue protein sequence, read N- to C-terminus: Fructose-1,6-bisphosphatase class 1 (332 aa).

Mg(2+) is bound by residues glutamate 89, aspartate 110, leucine 112, and aspartate 113. Substrate contacts are provided by residues 113 to 116, asparagine 206, tyrosine 239, 257 to 259, and lysine 269; these read DGSS and YLY. Glutamate 275 is a binding site for Mg(2+).

The protein belongs to the FBPase class 1 family. Homotetramer. It depends on Mg(2+) as a cofactor.

It is found in the cytoplasm. It catalyses the reaction beta-D-fructose 1,6-bisphosphate + H2O = beta-D-fructose 6-phosphate + phosphate. It functions in the pathway carbohydrate biosynthesis; gluconeogenesis. The sequence is that of Fructose-1,6-bisphosphatase class 1 from Shigella sonnei (strain Ss046).